The sequence spans 154 residues: Superoxide dismutase [Cu-Zn] (154 aa).

Residues His47, His49, and His64 each coordinate Cu cation. A disulfide bridge links Cys58 with Cys147. Positions 64, 72, 81, and 84 each coordinate Zn(2+). Position 121 (His121) interacts with Cu cation. Arg144 is a substrate binding site.

It belongs to the Cu-Zn superoxide dismutase family. In terms of assembly, homodimer. It depends on Cu cation as a cofactor. Zn(2+) is required as a cofactor.

It is found in the cytoplasm. It carries out the reaction 2 superoxide + 2 H(+) = H2O2 + O2. Destroys radicals which are normally produced within the cells and which are toxic to biological systems. The chain is Superoxide dismutase [Cu-Zn] (SOD1) from Claviceps purpurea (strain 20.1) (Ergot fungus).